A 477-amino-acid polypeptide reads, in one-letter code: Trigger factor (477 aa).

The 86-residue stretch at 169–254 (EDRVTIDYLG…VKEVAKPNEL (86 aa)) folds into the PPIase FKBP-type domain. Residues 435 to 477 (VSKEELTAEDEDAASEAKPAKKAAAKKKAAPKKKAEEGKSEEA) are disordered. Residues 454 to 466 (AKKAAAKKKAAPK) show a composition bias toward basic residues. Over residues 467–477 (KKAEEGKSEEA) the composition is skewed to basic and acidic residues.

This sequence belongs to the FKBP-type PPIase family. Tig subfamily.

The protein localises to the cytoplasm. The enzyme catalyses [protein]-peptidylproline (omega=180) = [protein]-peptidylproline (omega=0). Functionally, involved in protein export. Acts as a chaperone by maintaining the newly synthesized protein in an open conformation. Functions as a peptidyl-prolyl cis-trans isomerase. The chain is Trigger factor (tig) from Brucella melitensis biotype 1 (strain ATCC 23456 / CCUG 17765 / NCTC 10094 / 16M).